Consider the following 208-residue polypeptide: Vacuolar ATPase assembly protein VMA12 (208 aa).

The residue at position 2 (Ala2) is an N-acetylalanine. Helical transmembrane passes span 146 to 166 (LVIT…CTYL) and 179 to 199 (VLAA…VMVR).

As to quaternary structure, accessory component of the multisubunit proton-transporting vacuolar (V)-ATPase protein pump.

It localises to the cytoplasmic vesicle. The protein localises to the COPI-coated vesicle membrane. The protein resides in the endoplasmic reticulum-Golgi intermediate compartment membrane. It is found in the endoplasmic reticulum membrane. Accessory component of the proton-transporting vacuolar (V)-ATPase protein pump involved in intracellular iron homeostasis. In aerobic conditions, required for intracellular iron homeostasis, thus triggering the activity of Fe(2+) prolyl hydroxylase (PHD) enzymes, and leading to HIF1A hydroxylation and subsequent proteasomal degradation. Necessary for endolysosomal acidification and lysosomal degradation. May be involved in Golgi homeostasis. Binds 20(S)-hydroxycholesterol (20(S)-OHC). The sequence is that of Vacuolar ATPase assembly protein VMA12 from Homo sapiens (Human).